The following is a 271-amino-acid chain: Sulfur carrier protein FdhD (271 aa).

Residue cysteine 114 is the Cysteine persulfide intermediate of the active site.

The protein belongs to the FdhD family.

Its subcellular location is the cytoplasm. Functionally, required for formate dehydrogenase (FDH) activity. Acts as a sulfur carrier protein that transfers sulfur from IscS to the molybdenum cofactor prior to its insertion into FDH. This is Sulfur carrier protein FdhD from Agrobacterium fabrum (strain C58 / ATCC 33970) (Agrobacterium tumefaciens (strain C58)).